We begin with the raw amino-acid sequence, 191 residues long: Holliday junction branch migration complex subunit RuvA (191 aa).

The domain I stretch occupies residues 1 to 64; it reads MIRGVRGTLV…EDELALYGFA (64 aa). Residues 65–136 are domain II; sequence TEAELELFLS…ELRGRLPALT (72 aa). Residues 136 to 139 are flexible linker; sequence TEVQ. The domain III stretch occupies residues 140–191; the sequence is AGEPIDQELVAALQALGYTAQEARQAATHPEVRRAPSLEERIVAALRQLAPP.

Belongs to the RuvA family. As to quaternary structure, homotetramer. Forms an RuvA(8)-RuvB(12)-Holliday junction (HJ) complex. HJ DNA is sandwiched between 2 RuvA tetramers; dsDNA enters through RuvA and exits via RuvB. An RuvB hexamer assembles on each DNA strand where it exits the tetramer. Each RuvB hexamer is contacted by two RuvA subunits (via domain III) on 2 adjacent RuvB subunits; this complex drives branch migration. In the full resolvosome a probable DNA-RuvA(4)-RuvB(12)-RuvC(2) complex forms which resolves the HJ.

It localises to the cytoplasm. Its function is as follows. The RuvA-RuvB-RuvC complex processes Holliday junction (HJ) DNA during genetic recombination and DNA repair, while the RuvA-RuvB complex plays an important role in the rescue of blocked DNA replication forks via replication fork reversal (RFR). RuvA specifically binds to HJ cruciform DNA, conferring on it an open structure. The RuvB hexamer acts as an ATP-dependent pump, pulling dsDNA into and through the RuvAB complex. HJ branch migration allows RuvC to scan DNA until it finds its consensus sequence, where it cleaves and resolves the cruciform DNA. In Thermomicrobium roseum (strain ATCC 27502 / DSM 5159 / P-2), this protein is Holliday junction branch migration complex subunit RuvA.